We begin with the raw amino-acid sequence, 335 residues long: Phosphate acyltransferase (335 aa).

Belongs to the PlsX family. As to quaternary structure, homodimer. Probably interacts with PlsY.

The protein resides in the cytoplasm. The enzyme catalyses a fatty acyl-[ACP] + phosphate = an acyl phosphate + holo-[ACP]. It participates in lipid metabolism; phospholipid metabolism. In terms of biological role, catalyzes the reversible formation of acyl-phosphate (acyl-PO(4)) from acyl-[acyl-carrier-protein] (acyl-ACP). This enzyme utilizes acyl-ACP as fatty acyl donor, but not acyl-CoA. The chain is Phosphate acyltransferase from Streptococcus uberis (strain ATCC BAA-854 / 0140J).